We begin with the raw amino-acid sequence, 246 residues long: Sulfate transporter CysZ (246 aa).

Transmembrane regions (helical) follow at residues 24 to 44 (LFVLIPLTLNLLVFALLIGFA), 69 to 89 (IVWPLFVLLVLVIVFFTFTMV), 148 to 168 (LLVLSFVPGVNLIATPLWILF), and 214 to 234 (LLIPLVNLVMMPAAVAGATLF).

The protein belongs to the CysZ family.

Its subcellular location is the cell inner membrane. High affinity, high specificity proton-dependent sulfate transporter, which mediates sulfate uptake. Provides the sulfur source for the cysteine synthesis pathway. This Pseudomonas aeruginosa (strain ATCC 15692 / DSM 22644 / CIP 104116 / JCM 14847 / LMG 12228 / 1C / PRS 101 / PAO1) protein is Sulfate transporter CysZ.